The chain runs to 328 residues: Serine protease 27 (328 aa).

Residues 1-22 form the signal peptide; sequence MRQPHITALLLLPLLLRSGTEG. The propeptide at 23-37 is activation peptide; that stretch reads AEAMRACGHPRMFNR. Positions 38–280 constitute a Peptidase S1 domain; sequence MVGGEDALEG…HYQWIHQIIP (243 aa). The cysteines at positions 63 and 79 are disulfide-linked. His-78 (charge relay system) is an active-site residue. Asn-82 carries an N-linked (GlcNAc...) asparagine glycan. Residue Asp-127 is the Charge relay system of the active site. 3 disulfides stabilise this stretch: Cys-161-Cys-238, Cys-194-Cys-217, and Cys-228-Cys-256. The active-site Charge relay system is the Ser-232.

This sequence belongs to the peptidase S1 family.

The protein resides in the secreted. This chain is Serine protease 27 (Prss27), found in Rattus norvegicus (Rat).